A 404-amino-acid polypeptide reads, in one-letter code: Argininosuccinate synthase (404 aa).

ATP is bound by residues 10–18 (AYSGGLDTS) and Ala-37. L-citrulline-binding residues include Tyr-90 and Ser-95. Gly-120 is an ATP binding site. The L-aspartate site is built by Thr-122, Asn-126, and Asp-127. An L-citrulline-binding site is contributed by Asn-126. Residues Arg-130, Ser-181, Ser-190, Glu-266, and Tyr-278 each contribute to the L-citrulline site. Residues 173–200 (DKRGESPFSTDANLLHTSSEGKVLEDPW) form a disordered region. The segment covering 179 to 192 (PFSTDANLLHTSSE) has biased composition (polar residues).

This sequence belongs to the argininosuccinate synthase family. Type 1 subfamily. In terms of assembly, homotetramer.

Its subcellular location is the cytoplasm. The enzyme catalyses L-citrulline + L-aspartate + ATP = 2-(N(omega)-L-arginino)succinate + AMP + diphosphate + H(+). Its pathway is amino-acid biosynthesis; L-arginine biosynthesis; L-arginine from L-ornithine and carbamoyl phosphate: step 2/3. This is Argininosuccinate synthase from Novosphingobium aromaticivorans (strain ATCC 700278 / DSM 12444 / CCUG 56034 / CIP 105152 / NBRC 16084 / F199).